Here is a 164-residue protein sequence, read N- to C-terminus: 2-keto-3-deoxy-D-glycero-D-galacto-9-phosphonononic acid phosphatase (164 aa).

Asp10 and Asp12 together coordinate Mg(2+). Residues Thr34, Thr54–Glu56, Arg64–Lys67, and Lys80 each bind substrate. Residue Asp103 coordinates Mg(2+). Asn106 contributes to the substrate binding site.

The protein belongs to the KdsC family. Homotetramer. Requires Mg(2+) as cofactor.

The catalysed reaction is 3-deoxy-D-glycero-beta-D-galacto-non-2-ulopyranosonate 9-phosphate + H2O = 3-deoxy-D-glycero-beta-D-galacto-non-2-ulopyranosonate + phosphate. Its function is as follows. Involved in the biosynthesis of 2-keto-3-deoxy-D-glycero-D-galacto-nononic acid used in cell-wall polysaccharides. Catalyzes the hydrolysis of 2-keto-3-deoxy-D-glycero-D-galacto-9-phosphonononic acid (KDN-9-P) to yield 2-keto-3-deoxy-D-glycero-D-galacto-nononic acid (KDN). Also able to hydrolyze N-acetylneuraminate-9-phosphate (Neu5NAc-9-P), 2-keto-3-deoxy-D-manno-octulosonate-8-phosphate (KDO-8-P), phosphoenolpyruvate (PEP), gluconate 6-phosphate, tyrosine phosphate ester and glucose-6-P as substrate. In Bacteroides thetaiotaomicron (strain ATCC 29148 / DSM 2079 / JCM 5827 / CCUG 10774 / NCTC 10582 / VPI-5482 / E50), this protein is 2-keto-3-deoxy-D-glycero-D-galacto-9-phosphonononic acid phosphatase.